The sequence spans 439 residues: NAD-dependent malic enzyme 1 (439 aa).

The 76-residue stretch at 9-84 (TLMIETPSVP…GIRLHTVSDE (76 aa)) folds into the ACT domain. Residue tyrosine 112 is the Proton donor of the active site. Catalysis depends on lysine 167, which acts as the Proton acceptor. Positions 209, 210, and 235 each coordinate a divalent metal cation. NAD(+) contacts are provided by residues 268–271 (LGAA), asparagine 347, and asparagine 373.

Belongs to the malic enzymes family. It depends on Mg(2+) as a cofactor. Requires Mn(2+) as cofactor.

It carries out the reaction (S)-malate + NAD(+) = pyruvate + CO2 + NADH. It catalyses the reaction oxaloacetate + H(+) = pyruvate + CO2. Its function is as follows. Catalyzes the decarboxylation of malate to pyruvate. Is specific for NAD, cannot use NADP. Can also catalyze the decarboxylation of oxaloacetate. Involved in keeping the ATP levels high. The protein is NAD-dependent malic enzyme 1 of Bacillus subtilis (strain 168).